The primary structure comprises 354 residues: Rhodopsin (354 aa).

Topologically, residues 1–36 are extracellular; sequence MNGTEGPNFYVPFSNKSGVVRSPFEYPQYYLAEPWQ. Asn2 and Asn15 each carry an N-linked (GlcNAc...) asparagine glycan. The helical transmembrane segment at 37-61 threads the bilayer; the sequence is YSVLAAYMFLLILLGFPVNFLTLYV. Residues 62-73 are Cytoplasmic-facing; that stretch reads TIQHKKLRTPLN. The helical transmembrane segment at 74–96 threads the bilayer; it reads YILLNLAFANHFMVFGGFPVTMY. The Extracellular segment spans residues 97–110; it reads SSMHGYFVFGQTGC. A disulfide bond links Cys110 and Cys187. The helical transmembrane segment at 111-133 threads the bilayer; sequence YIEGFFATMGGEIALWSLVVLAI. Positions 134–136 match the 'Ionic lock' involved in activated form stabilization motif; it reads ERY. The Cytoplasmic segment spans residues 134-152; that stretch reads ERYVVVCKPMSNFRFGENH. The chain crosses the membrane as a helical span at residues 153–173; it reads AIMGVMMTWIMALACAAPPLF. The Extracellular segment spans residues 174-202; the sequence is GWSRYIPEGMQCSCGVDYYTLKPEVNNES. A helical transmembrane segment spans residues 203–224; the sequence is FVIYMFLVHFTIPLMIIFFCYG. Residues 225–252 lie on the Cytoplasmic side of the membrane; it reads RLVCTVKEAAAQQQESATTQKAEKEVTR. A helical transmembrane segment spans residues 253 to 274; the sequence is MVIIMVVAFLICWVPYASVAFY. Residues 275–286 are Extracellular-facing; it reads IFSNQGTDFGPI. A helical membrane pass occupies residues 287–308; it reads FMTVPAFFAKSSAIYNPVIYIV. Lys296 is modified (N6-(retinylidene)lysine). Residues 309–354 lie on the Cytoplasmic side of the membrane; it reads LNKQFRNCMITTICCGKNPFGDDETTSAATSKTEASSVSSSQVSPA. 2 S-palmitoyl cysteine lipidation sites follow: Cys322 and Cys323. The interval 332–354 is disordered; it reads ETTSAATSKTEASSVSSSQVSPA. Over residues 334–354 the composition is skewed to low complexity; the sequence is TSAATSKTEASSVSSSQVSPA.

Belongs to the G-protein coupled receptor 1 family. Opsin subfamily. Post-translationally, contains one covalently linked retinal chromophore. Upon light absorption, the covalently bound 11-cis-retinal is converted to all-trans-retinal. After hydrolysis of the Schiff base and release of the covalently bound all-trans-retinal, active rhodopsin is regenerated by binding of a fresh molecule of 11-cis-retinal.

The protein localises to the membrane. It localises to the cell projection. It is found in the cilium. The protein resides in the photoreceptor outer segment. Its function is as follows. Photoreceptor required for image-forming vision at low light intensity. Required for photoreceptor cell viability after birth. Light-induced isomerization of 11-cis to all-trans retinal triggers a conformational change that activates signaling via G-proteins. Subsequent receptor phosphorylation mediates displacement of the bound G-protein alpha subunit by arrestin and terminates signaling. In Ambystoma tigrinum (Eastern tiger salamander), this protein is Rhodopsin (RHO).